Consider the following 196-residue polypeptide: Holliday junction branch migration complex subunit RuvA (196 aa).

Residues methionine 1–alanine 63 form a domain I region. Residues threonine 64–glutamine 142 are domain II. Residues glutamine 142–serine 146 are flexible linker. Positions serine 147–lysine 196 are domain III.

Belongs to the RuvA family. In terms of assembly, homotetramer. Forms an RuvA(8)-RuvB(12)-Holliday junction (HJ) complex. HJ DNA is sandwiched between 2 RuvA tetramers; dsDNA enters through RuvA and exits via RuvB. An RuvB hexamer assembles on each DNA strand where it exits the tetramer. Each RuvB hexamer is contacted by two RuvA subunits (via domain III) on 2 adjacent RuvB subunits; this complex drives branch migration. In the full resolvosome a probable DNA-RuvA(4)-RuvB(12)-RuvC(2) complex forms which resolves the HJ.

It localises to the cytoplasm. Its function is as follows. The RuvA-RuvB-RuvC complex processes Holliday junction (HJ) DNA during genetic recombination and DNA repair, while the RuvA-RuvB complex plays an important role in the rescue of blocked DNA replication forks via replication fork reversal (RFR). RuvA specifically binds to HJ cruciform DNA, conferring on it an open structure. The RuvB hexamer acts as an ATP-dependent pump, pulling dsDNA into and through the RuvAB complex. HJ branch migration allows RuvC to scan DNA until it finds its consensus sequence, where it cleaves and resolves the cruciform DNA. This Streptococcus suis (strain 98HAH33) protein is Holliday junction branch migration complex subunit RuvA.